Here is a 109-residue protein sequence, read N- to C-terminus: Photosystem II reaction center Psb28 protein (109 aa).

Belongs to the Psb28 family. As to quaternary structure, part of the photosystem II complex.

The protein localises to the plastid. It is found in the chloroplast thylakoid membrane. This Cyanidioschyzon merolae (strain NIES-3377 / 10D) (Unicellular red alga) protein is Photosystem II reaction center Psb28 protein.